We begin with the raw amino-acid sequence, 373 residues long: Chaperone protein DnaJ (373 aa).

In terms of domain architecture, J spans 5–70 (CYYEVLEVSR…EKRSRYDRFG (66 aa)). The segment at 134–212 (GTEVELNIPV…CRGAGYVRKQ (79 aa)) adopts a CR-type zinc-finger fold. Zn(2+) is bound by residues cysteine 147, cysteine 150, cysteine 164, cysteine 167, cysteine 186, cysteine 189, cysteine 200, and cysteine 203. CXXCXGXG motif repeat units follow at residues 147–154 (CDTCEGSG), 164–171 (CSHCGGRG), 186–193 (CPACNGRG), and 200–207 (CSECRGAG).

This sequence belongs to the DnaJ family. Homodimer. It depends on Zn(2+) as a cofactor.

Its subcellular location is the cytoplasm. In terms of biological role, participates actively in the response to hyperosmotic and heat shock by preventing the aggregation of stress-denatured proteins and by disaggregating proteins, also in an autonomous, DnaK-independent fashion. Unfolded proteins bind initially to DnaJ; upon interaction with the DnaJ-bound protein, DnaK hydrolyzes its bound ATP, resulting in the formation of a stable complex. GrpE releases ADP from DnaK; ATP binding to DnaK triggers the release of the substrate protein, thus completing the reaction cycle. Several rounds of ATP-dependent interactions between DnaJ, DnaK and GrpE are required for fully efficient folding. Also involved, together with DnaK and GrpE, in the DNA replication of plasmids through activation of initiation proteins. This chain is Chaperone protein DnaJ, found in Maridesulfovibrio salexigens (strain ATCC 14822 / DSM 2638 / NCIMB 8403 / VKM B-1763) (Desulfovibrio salexigens).